The sequence spans 143 residues: MAKAVPKIGSRKRVRIGLRRNARFSLRKSARRITKGVIHVQASFNNTIITVTDPQGRVVFWSSAGTCGFKSSRKASPYAGQRTAVDAIRTVGLQRAEVMVKGAGSGRDAALRAIAKSGVRLSCIRDVTPMPHNGCRPPKKRRL.

Belongs to the universal ribosomal protein uS11 family. In terms of assembly, part of the 30S ribosomal subunit.

Its subcellular location is the plastid. It is found in the chloroplast. This is Small ribosomal subunit protein uS11c from Brachypodium distachyon (Purple false brome).